Reading from the N-terminus, the 96-residue chain is Small ribosomal subunit protein bS6 (96 aa).

This sequence belongs to the bacterial ribosomal protein bS6 family.

Functionally, binds together with bS18 to 16S ribosomal RNA. This chain is Small ribosomal subunit protein bS6, found in Streptococcus thermophilus (strain ATCC BAA-491 / LMD-9).